A 76-amino-acid chain; its full sequence is Small ribosomal subunit protein bS16 (76 aa).

This sequence belongs to the bacterial ribosomal protein bS16 family.

This chain is Small ribosomal subunit protein bS16, found in Helicobacter pylori (strain HPAG1).